Consider the following 312-residue polypeptide: tRNA dimethylallyltransferase (312 aa).

An ATP-binding site is contributed by 15–22; sequence GPTAAGKS. 17–22 lines the substrate pocket; it reads TAAGKS. An interaction with substrate tRNA region spans residues 40–43; the sequence is DSMQ.

The protein belongs to the IPP transferase family. In terms of assembly, monomer. It depends on Mg(2+) as a cofactor.

It catalyses the reaction adenosine(37) in tRNA + dimethylallyl diphosphate = N(6)-dimethylallyladenosine(37) in tRNA + diphosphate. Catalyzes the transfer of a dimethylallyl group onto the adenine at position 37 in tRNAs that read codons beginning with uridine, leading to the formation of N6-(dimethylallyl)adenosine (i(6)A). The protein is tRNA dimethylallyltransferase of Streptomyces avermitilis (strain ATCC 31267 / DSM 46492 / JCM 5070 / NBRC 14893 / NCIMB 12804 / NRRL 8165 / MA-4680).